A 95-amino-acid polypeptide reads, in one-letter code: MKLNREDVLHIARLAKLGLEEDEINRLSKELSALLEHFEVLQQVDTTGVEPTAQSTPVKSVLKEDIIKPSYDREEILSNAPRREGDYVRIRAVME.

Belongs to the GatC family. As to quaternary structure, heterotrimer of A, B and C subunits.

It carries out the reaction L-glutamyl-tRNA(Gln) + L-glutamine + ATP + H2O = L-glutaminyl-tRNA(Gln) + L-glutamate + ADP + phosphate + H(+). It catalyses the reaction L-aspartyl-tRNA(Asn) + L-glutamine + ATP + H2O = L-asparaginyl-tRNA(Asn) + L-glutamate + ADP + phosphate + 2 H(+). Functionally, allows the formation of correctly charged Asn-tRNA(Asn) or Gln-tRNA(Gln) through the transamidation of misacylated Asp-tRNA(Asn) or Glu-tRNA(Gln) in organisms which lack either or both of asparaginyl-tRNA or glutaminyl-tRNA synthetases. The reaction takes place in the presence of glutamine and ATP through an activated phospho-Asp-tRNA(Asn) or phospho-Glu-tRNA(Gln). The polypeptide is Aspartyl/glutamyl-tRNA(Asn/Gln) amidotransferase subunit C (Dehalococcoides mccartyi (strain ATCC BAA-2266 / KCTC 15142 / 195) (Dehalococcoides ethenogenes (strain 195))).